A 186-amino-acid chain; its full sequence is MADIAALTKLIEPEAKALGLDLVRVAFFGGKSDPTLQVMAERPDTRQLDIADCEALSRRISDKFDELDPIEDAYRLEVSSPGIDRPLTRVKDWADWSGFDARVKLAAPLDGRKQFDGRIVASDGDSVTLGVNKLGEVTVPLAQIASAKLILTDALIKATAPLSTEGVDQIVEDAPHRGAGKIQLEG.

It belongs to the RimP family.

Its subcellular location is the cytoplasm. Functionally, required for maturation of 30S ribosomal subunits. This chain is Ribosome maturation factor RimP, found in Rhizorhabdus wittichii (strain DSM 6014 / CCUG 31198 / JCM 15750 / NBRC 105917 / EY 4224 / RW1) (Sphingomonas wittichii).